A 409-amino-acid chain; its full sequence is S-adenosylmethionine synthase (409 aa).

141–146 (GQGSAD) provides a ligand contact to ATP.

It belongs to the AdoMet synthase 2 family. Mg(2+) is required as a cofactor.

It carries out the reaction L-methionine + ATP + H2O = S-adenosyl-L-methionine + phosphate + diphosphate. The protein operates within amino-acid biosynthesis; S-adenosyl-L-methionine biosynthesis; S-adenosyl-L-methionine from L-methionine: step 1/1. Functionally, catalyzes the formation of S-adenosylmethionine from methionine and ATP. This Hyperthermus butylicus (strain DSM 5456 / JCM 9403 / PLM1-5) protein is S-adenosylmethionine synthase.